A 537-amino-acid polypeptide reads, in one-letter code: MVVLEGGGGVVTIGNNQYLQPDYLAPLPTTMDAKKSPLALLAQTCSQIGADSSAVKPLLAMDKNKTKPGACSSSSNSSSSSGSAEISAAKSPSGQAKSPKSSTPISSTATSASLSNTSTGEIKLAFKPYETNVLSHQNQNSFKSSSSLDAEPTRPSSKNSSSAQERVPSRSKSNATPTDGGKAEISAHDSSSSRKTVSPSGSSQRGASPIVRSGMEVLNNANGTAQHPKEMSSMAAAAAAAAAAYKAAGPYGLNPLSALCCPPGMEQHANPAFRPPFAGGFSHHHAAMLAVAANGGYPGGAPGGGPAGQPNPYISYQRIKTPAGGEAIVPVCKDPYCQGCPYSAHTQQMLMGAPCPAGCTQCEHQKYGLAMASAAGLPPAHPYSQAAAAAAANAAAARSAPYVCSWVVGDAYCGKRFQTSDELFSHLRTHTGNLSDPAAAAAALAQSQAQSLLGTLFPPSALRAGYPTPPLSPMSAAAAAARYHPYAKPPPGALAGGPSPFGAAGAFNPAAAAAAAALGPYYSPYAMYGQRMGAAHQ.

Disordered regions lie at residues 64 to 116 and 138 to 212; these read NKTK…SLSN and NQNS…PIVR. Residues 70–116 show a composition bias toward low complexity; that stretch reads ACSSSSNSSSSSGSAEISAAKSPSGQAKSPKSSTPISSTATSASLSN. A phosphoserine mark is found at serine 98 and serine 157. Polar residues-rich tracts occupy residues 138 to 177 and 188 to 206; these read NQNS…NATP and HDSS…SQRG. Serine 208 bears the Phosphoserine mark. The C2H2-type zinc-finger motif lies at 402-430; sequence YVCSWVVGDAYCGKRFQTSDELFSHLRTH.

This sequence belongs to the Elbow/Noc family. As to quaternary structure, interacts with elB. In terms of tissue distribution, highly expressed in the adult head.

Its function is as follows. May negatively regulate Notch-induced cell proliferation in the eye-head primordium. Required for development of the supraesophageal ganglion and ocelli. May act in leg and wing primordia to negatively regulate body-wall specifying genes and thereby promote appendage formation. Plays a role in tracheal development. This Drosophila melanogaster (Fruit fly) protein is Zinc finger protein Noc (noc).